Here is a 507-residue protein sequence, read N- to C-terminus: ATP synthase subunit alpha, chloroplastic (507 aa).

170-177 (GDRQTGKT) is a binding site for ATP.

It belongs to the ATPase alpha/beta chains family. As to quaternary structure, F-type ATPases have 2 components, CF(1) - the catalytic core - and CF(0) - the membrane proton channel. CF(1) has five subunits: alpha(3), beta(3), gamma(1), delta(1), epsilon(1). CF(0) has four main subunits: a, b, b' and c.

It is found in the plastid. The protein localises to the chloroplast thylakoid membrane. The enzyme catalyses ATP + H2O + 4 H(+)(in) = ADP + phosphate + 5 H(+)(out). Functionally, produces ATP from ADP in the presence of a proton gradient across the membrane. The alpha chain is a regulatory subunit. The protein is ATP synthase subunit alpha, chloroplastic of Nicotiana tabacum (Common tobacco).